Reading from the N-terminus, the 188-residue chain is Putative nucleotidase OB0422 (188 aa).

The protein belongs to the 5'(3')-deoxyribonucleotidase family.

The polypeptide is Putative nucleotidase OB0422 (Oceanobacillus iheyensis (strain DSM 14371 / CIP 107618 / JCM 11309 / KCTC 3954 / HTE831)).